The primary structure comprises 215 residues: Chaperone protein TorD (215 aa).

This sequence belongs to the TorD/DmsD family. TorD subfamily.

It is found in the cytoplasm. Functionally, involved in the biogenesis of TorA. Acts on TorA before the insertion of the molybdenum cofactor and, as a result, probably favors a conformation of the apoenzyme that is competent for acquiring the cofactor. This chain is Chaperone protein TorD, found in Shewanella piezotolerans (strain WP3 / JCM 13877).